A 194-amino-acid polypeptide reads, in one-letter code: FAD-linked sulfhydryl oxidase ERV1 (194 aa).

The interval 44–72 (LSLSLSPPPTPPSPPPPPPEVLKKDSKAA) is disordered. Pro residues predominate over residues 49–63 (SPPPTPPSPPPPPPE). One can recognise an ERV/ALR sulfhydryl oxidase domain in the interval 72 to 172 (APLTKEEVGR…FPCQRVNARW (101 aa)). FAD-binding residues include Lys76, Arg81, Trp84, Glu121, His125, Cys148, His151, Asn152, Asn155, Lys160, and Arg171. Cys119 and Cys122 are disulfide-bonded. An intrachain disulfide couples Cys148 to Cys165. Cys177 and Cys182 are oxidised to a cystine. Positions 177 to 182 (CPERSC) match the Required for dimerization and substrate specificity motif.

As to quaternary structure, homodimer. It depends on FAD as a cofactor. In terms of processing, contains three disulfide bonds; one catalytic disulfide (Cys-119 to Cys-122), one structural disulfide (Cys-148 to Cys-165), and one shuttle disulfide (Cys-177 to Cys-182).

Its subcellular location is the mitochondrion. It carries out the reaction 2 R'C(R)SH + O2 = R'C(R)S-S(R)CR' + H2O2. In terms of biological role, FAD-dependent sulfhydryl oxidase that catalyzes disulfide bond formation. Oxidizes thioredoxin in vitro. Required for the import and folding of small cysteine-containing proteins in the mitochondrial intermembrane space, and can act independently of the oxidoreductase MIA40. Can oxidize the cytochrome c oxidase assembly protein COX19, a typical substrate of MIA40. The protein is FAD-linked sulfhydryl oxidase ERV1 of Oryza sativa subsp. japonica (Rice).